A 166-amino-acid chain; its full sequence is Regulatory protein RecX (166 aa).

It belongs to the RecX family.

The protein localises to the cytoplasm. In terms of biological role, modulates RecA activity. The sequence is that of Regulatory protein RecX from Salmonella paratyphi C (strain RKS4594).